Consider the following 344-residue polypeptide: Ferrochelatase (344 aa).

Positions 211 and 292 each coordinate Fe cation.

It belongs to the ferrochelatase family.

Its subcellular location is the cytoplasm. The enzyme catalyses heme b + 2 H(+) = protoporphyrin IX + Fe(2+). It functions in the pathway porphyrin-containing compound metabolism; protoheme biosynthesis; protoheme from protoporphyrin-IX: step 1/1. Functionally, catalyzes the ferrous insertion into protoporphyrin IX. The chain is Ferrochelatase from Methylobacillus flagellatus (strain ATCC 51484 / DSM 6875 / VKM B-1610 / KT).